Consider the following 636-residue polypeptide: ABC transporter ATP-binding protein RamA (636 aa).

The next 5 helical transmembrane spans lie at 45–65 (VLVL…PLAL), 78–98 (AGWW…LDSA), 175–195 (LVDV…ALLL), 269–289 (GVLV…RLAA), and 297–317 (LLAV…ASLL). The region spanning 45-322 (VLVLLCSVAA…AASLLGAIVR (278 aa)) is the ABC transmembrane type-1 domain. The ABC transporter domain maps to 354 to 585 (LRLCGVRVLR…AGYREVFGAG (232 aa)). 386–393 (GRSGAGKS) is a binding site for ATP. Over residues 589–606 (GAGAGAGAGADAGAGADA) the composition is skewed to gly residues. A disordered region spans residues 589 to 636 (GAGAGAGAGADAGAGADAGPGPDSGAATAVGGSGPGPVRRPEPEEARP). The segment covering 607–618 (GPGPDSGAATAV) has biased composition (low complexity). Residues 627–636 (RRPEPEEARP) are compositionally biased toward basic and acidic residues.

The protein belongs to the ABC transporter superfamily.

The protein localises to the cell membrane. Probably involved in exporting SapB from the cell. Expression of the ram locus (ramA, ramB and ramR) induces rapid aerial mycelium formation in S.lividans. In Streptomyces coelicolor (strain ATCC BAA-471 / A3(2) / M145), this protein is ABC transporter ATP-binding protein RamA.